Consider the following 1367-residue polypeptide: DNA polymerase III PolC-type (1367 aa).

The Exonuclease domain maps to Phe-358 to Phe-513.

Belongs to the DNA polymerase type-C family. PolC subfamily.

The protein localises to the cytoplasm. The catalysed reaction is DNA(n) + a 2'-deoxyribonucleoside 5'-triphosphate = DNA(n+1) + diphosphate. Its function is as follows. Required for replicative DNA synthesis. This DNA polymerase also exhibits 3' to 5' exonuclease activity. This Thermotoga maritima (strain ATCC 43589 / DSM 3109 / JCM 10099 / NBRC 100826 / MSB8) protein is DNA polymerase III PolC-type.